The primary structure comprises 422 residues: Lactoyl-CoA dehydratase subunit alpha (422 aa).

This sequence belongs to the FldB/FldC dehydratase alpha/beta subunit family. Heterodimer of an alpha (LcdA) and a beta (LcdB) subunit. [4Fe-4S] cluster serves as cofactor. Requires FMN as cofactor. Riboflavin is required as a cofactor. The cofactor is Mg(2+).

The catalysed reaction is (R)-lactoyl-CoA = acryloyl-CoA + H2O. It catalyses the reaction (2R)-hydroxybutanoyl-CoA = (2E)-butenoyl-CoA + H2O. Its activity is regulated as follows. Activated by the LcdC protein. Involved in the acrylate pathway for the conversion of D-lactic acid to propionic acid. Catalyzes the reversible dehydration of Lactoyl-CoA and 2-hydroxybutyroyl-CoA to acryloyl-CoA and crotonyl-CoA, respectively. This is Lactoyl-CoA dehydratase subunit alpha (lcdA) from Anaerotignum propionicum (Clostridium propionicum).